A 406-amino-acid polypeptide reads, in one-letter code: 2,3-bisphosphoglycerate-independent phosphoglycerate mutase (406 aa).

Belongs to the BPG-independent phosphoglycerate mutase family. A-PGAM subfamily.

It catalyses the reaction (2R)-2-phosphoglycerate = (2R)-3-phosphoglycerate. The protein operates within carbohydrate degradation; glycolysis; pyruvate from D-glyceraldehyde 3-phosphate: step 3/5. Its function is as follows. Catalyzes the interconversion of 2-phosphoglycerate and 3-phosphoglycerate. In Methanococcus maripaludis (strain DSM 14266 / JCM 13030 / NBRC 101832 / S2 / LL), this protein is 2,3-bisphosphoglycerate-independent phosphoglycerate mutase.